The sequence spans 88 residues: Conotoxin VxVIB (88 aa).

Positions 1-22 (MNLACVLIVAVLFLTASQLATA) are cleaved as a signal peptide. Positions 23-52 (ASYARDKQEYPAVRSSDEMQDSEDLTLTKE) are excised as a propeptide. 3 disulfide bridges follow: cysteine 53–cysteine 68, cysteine 60–cysteine 72, and cysteine 67–cysteine 81.

As to expression, expressed by the venom duct.

It is found in the secreted. Its function is as follows. May act as a neurotoxin, but produces no obvious effect on ionic currents when tested on the mouse dorsal rooted ganglia (DRG). This is Conotoxin VxVIB from Conus vexillum (Flag cone).